The primary structure comprises 217 residues: Thiosulfate dehydrogenase electron acceptor (217 aa).

Positions 1–28 are cleaved as a signal peptide; that stretch reads MRQFIPMRRVLAVATLGALFWAAPASWA. 2 Cytochrome c domains span residues 29 to 104 and 116 to 206; these read AAPP…SKLK and AAAA…AAQP. The heme c site is built by C37, C40, H41, C137, C140, and H141.

In terms of processing, binds 2 heme c groups covalently per subunit.

Its function is as follows. Acts as an electron acceptor for the thiosulfate dehydrogenase TsdA. The protein is Thiosulfate dehydrogenase electron acceptor (tsdB) of Thiomonas intermedia (strain K12) (Thiobacillus intermedius).